The primary structure comprises 73 residues: NADH dehydrogenase [ubiquinone] 1 beta subcomplex subunit 3-B (73 aa).

The helical transmembrane segment at 31–48 (ALPGLGIGVAAFCVYLVG) threads the bilayer.

It belongs to the complex I NDUFB3 subunit family. Complex I is composed of at least 49 different subunits.

It localises to the mitochondrion inner membrane. Its function is as follows. Accessory subunit of the mitochondrial membrane respiratory chain NADH dehydrogenase (Complex I), that is believed not to be involved in catalysis. Complex I functions in the transfer of electrons from NADH to the respiratory chain. The immediate electron acceptor for the enzyme is believed to be ubiquinone. The polypeptide is NADH dehydrogenase [ubiquinone] 1 beta subcomplex subunit 3-B (Arabidopsis thaliana (Mouse-ear cress)).